Here is an 87-residue protein sequence, read N- to C-terminus: Small ribosomal subunit protein uS17 (87 aa).

The protein belongs to the universal ribosomal protein uS17 family. Part of the 30S ribosomal subunit.

Its function is as follows. One of the primary rRNA binding proteins, it binds specifically to the 5'-end of 16S ribosomal RNA. The protein is Small ribosomal subunit protein uS17 of Geobacillus kaustophilus (strain HTA426).